A 147-amino-acid polypeptide reads, in one-letter code: Large ribosomal subunit protein uL13 (147 aa).

It belongs to the universal ribosomal protein uL13 family. Part of the 50S ribosomal subunit.

Functionally, this protein is one of the early assembly proteins of the 50S ribosomal subunit, although it is not seen to bind rRNA by itself. It is important during the early stages of 50S assembly. The protein is Large ribosomal subunit protein uL13 of Rhodococcus erythropolis (strain PR4 / NBRC 100887).